Reading from the N-terminus, the 213-residue chain is RNA chaperone ProQ (213 aa).

Positions 105 to 150 (ESQEKAKAKRAAQTPKAAPAGKAPAKKAPKKVAVPARKTERPAKAA) are disordered. The segment covering 115–127 (AAQTPKAAPAGKA) has biased composition (low complexity).

It belongs to the ProQ family.

It localises to the cytoplasm. Its function is as follows. RNA chaperone with significant RNA binding, RNA strand exchange and RNA duplexing activities. The protein is RNA chaperone ProQ of Shewanella oneidensis (strain ATCC 700550 / JCM 31522 / CIP 106686 / LMG 19005 / NCIMB 14063 / MR-1).